Reading from the N-terminus, the 622-residue chain is DNA mismatch repair protein MutL (622 aa).

This sequence belongs to the DNA mismatch repair MutL/HexB family.

Functionally, this protein is involved in the repair of mismatches in DNA. It is required for dam-dependent methyl-directed DNA mismatch repair. May act as a 'molecular matchmaker', a protein that promotes the formation of a stable complex between two or more DNA-binding proteins in an ATP-dependent manner without itself being part of a final effector complex. The protein is DNA mismatch repair protein MutL of Actinobacillus pleuropneumoniae serotype 3 (strain JL03).